A 286-amino-acid chain; its full sequence is Cysteine-rich repeat secretory protein 57 (286 aa).

The first 20 residues, 1–20, serve as a signal peptide directing secretion; sequence METTKKLSVLLCLFFTMNQA. Residues 21–265 lie on the Extracellular side of the membrane; the sequence is ISESDSDEHM…PSRSGSFSIR (245 aa). 2 consecutive Gnk2-homologous domains span residues 29-131 and 137-247; these read HMAT…DKFF and TKPN…TSNS. N-linked (GlcNAc...) asparagine glycans are attached at residues N35, N40, N44, N60, N69, N90, N100, N108, N209, and N246. A helical transmembrane segment spans residues 266–284; sequence GNNKILVGMILAVSVFAFL. At 285–286 the chain is on the cytoplasmic side; the sequence is GL.

It belongs to the cysteine-rich repeat secretory protein family.

The protein resides in the membrane. This is Cysteine-rich repeat secretory protein 57 (CRRSP57) from Arabidopsis thaliana (Mouse-ear cress).